We begin with the raw amino-acid sequence, 548 residues long: MNSIFKKIKNYTIVSGVFFLGSAFIIPNTSNLSSTLYKELIAVLGLLILLTVKSFDYKKILIPKNFYWFLFVIFIIFIQLIVGEIYFFQDFFFSISFLVILFLSFLLGFNERLNGDDLIVKKIAWIFIIVVQISFLIAINQKIEIVQNFFLFSSSYNGRSTANLGQPNQFSTLILITLFLLCYLREKNSLNNMVFNILSFCLIFANVMTQSRSAWISVILISLLYLLKFQKKIELRRVIFFNIVFWTLVYCVPLLFNLIFFQKNSYSTFDRLTMGSSRFEIWPQLLKAVFHKPFIGYGWGQTGVAQLETINKSSTKGEWFTYSHNLFLDLMLWNGFFIGLIISILILCFLIELYSSIKNKSDLFLFFCVVAFFVHCLLEYPFAYTYFLIPVGFLCGYISTQNIKNSISYFNLSKRKLTLFLGCCWLGYVAFWVEVLDISKKNEIYARQFLFSNHVKFYNIENYILDGFSKQLDFQYLDYCELKDKYQLLDFKKVAYRYPNASIVYKYYSISAEMKMDQKSANQIIRAYSVIKNQKIIKPKLKFCSIEY.

Transmembrane regions (helical) follow at residues 8 to 28 (IKNYTIVSGVFFLGSAFIIPN), 32 to 52 (LSSTLYKELIAVLGLLILLTV), 68 to 88 (WFLFVIFIIFIQLIVGEIYFF), 91 to 111 (FFFSISFLVILFLSFLLGFNE), 119 to 139 (IVKKIAWIFIIVVQISFLIAI), 164 to 184 (LGQPNQFSTLILITLFLLCYL), 189 to 209 (SLNNMVFNILSFCLIFANVMT), 213 to 233 (SAWISVILISLLYLLKFQKKI), 239 to 259 (IFFNIVFWTLVYCVPLLFNLI), 331 to 351 (MLWNGFFIGLIISILILCFLI), 363 to 383 (LFLFFCVVAFFVHCLLEYPFA), and 418 to 438 (TLFLGCCWLGYVAFWVEVLDI).

This sequence belongs to the PglL O-oligosaccharyltransferase family.

The protein resides in the cell membrane. Specifically catalyzes the glycosylation of the pilin-like competence factor ComP. In Acinetobacter baylyi (strain ATCC 33305 / BD413 / ADP1), this protein is ComP-specific O-oligosaccharyltransferase.